The chain runs to 306 residues: Tyrosine recombinase XerC (306 aa).

Residues 10–94 (ARCHSYLQQF…AVKQWGEFLL (85 aa)) enclose the Core-binding (CB) domain. The Tyr recombinase domain occupies 115–294 (PLPKNIDVDS…DFQHLAKVYD (180 aa)). Catalysis depends on residues Arg154, Lys178, His246, Arg249, and His272. Tyr281 acts as the O-(3'-phospho-DNA)-tyrosine intermediate in catalysis.

Belongs to the 'phage' integrase family. XerC subfamily. In terms of assembly, forms a cyclic heterotetrameric complex composed of two molecules of XerC and two molecules of XerD.

The protein resides in the cytoplasm. Site-specific tyrosine recombinase, which acts by catalyzing the cutting and rejoining of the recombining DNA molecules. The XerC-XerD complex is essential to convert dimers of the bacterial chromosome into monomers to permit their segregation at cell division. It also contributes to the segregational stability of plasmids. This chain is Tyrosine recombinase XerC, found in Shewanella oneidensis (strain ATCC 700550 / JCM 31522 / CIP 106686 / LMG 19005 / NCIMB 14063 / MR-1).